The sequence spans 149 residues: Calmodulin (149 aa).

Ala-2 bears the N-acetylalanine mark. 4 consecutive EF-hand domains span residues 8–43 (DQIS…LGQN), 44–79 (PTEA…KMKD), 81–116 (DSEE…LGEK), and 117–149 (LTDE…MMAK). The Ca(2+) site is built by Asp-21, Asp-23, Asp-25, Cys-27, Glu-32, Asp-57, Asp-59, Asn-61, Thr-63, Glu-68, Asp-94, Asp-96, Asn-98, and Glu-105. Lys-116 carries the post-translational modification N6,N6,N6-trimethyllysine. Ca(2+) contacts are provided by Asp-130, Asp-132, Asp-134, Gln-136, and Glu-141.

It belongs to the calmodulin family.

In terms of biological role, calmodulin mediates the control of a large number of enzymes, ion channels and other proteins by Ca(2+). Among the enzymes to be stimulated by the calmodulin-Ca(2+) complex are a number of protein kinases and phosphatases. The sequence is that of Calmodulin (CAM) from Malus domestica (Apple).